The primary structure comprises 209 residues: Virulence factors putative positive transcription regulator BvgA (209 aa).

A Response regulatory domain is found at 4-119; it reads KVLIIDDHPV…EVINAAKAVM (116 aa). D54 is modified (4-aspartylphosphate). An HTH luxR-type domain is found at 142–207; it reads DSTLISVLSN…ELIDLAKRNN (66 aa). Residues 166–185 constitute a DNA-binding region (H-T-H motif); sequence NKDIADSMFLSNKTVSTYKT.

In terms of assembly, homodimer. Post-translationally, phosphorylated by BvgS.

Member of the two-component regulatory system BvgS/BvgA. Activates the transcription of virulence genes. This is Virulence factors putative positive transcription regulator BvgA (bvgA) from Bordetella bronchiseptica (strain ATCC BAA-588 / NCTC 13252 / RB50) (Alcaligenes bronchisepticus).